We begin with the raw amino-acid sequence, 923 residues long: Carnitine O-acetyltransferase YAT2 (923 aa).

Residues 1-11 show a composition bias toward polar residues; that stretch reads MSSGSTIVSSD. Disordered stretches follow at residues 1–21 and 197–232; these read MSSGSTIVSSDKSGRTFKHEE and NKPYTASDLEDPDYSSDEDDNDEPTQKDFDDRKRKH. Residue Ser2 is modified to N-acetylserine. A compositionally biased stretch (basic and acidic residues) spans 12–21; that stretch reads KSGRTFKHEE. Over residues 204–219 the composition is skewed to acidic residues; that stretch reads DLEDPDYSSDEDDNDE. Over residues 220-232 the composition is skewed to basic and acidic residues; it reads PTQKDFDDRKRKH. CoA is bound by residues 529 to 541 and Ser567; that span reads GRRSAQRLGVKPD. Ser576 is a binding site for (R)-carnitine. The interval 763–787 is disordered; it reads NAVNNPPKRNGHTVNGSRKTSSSSQ. Over residues 774–787 the composition is skewed to polar residues; sequence HTVNGSRKTSSSSQ. Position 783 is a phosphoserine (Ser783).

The protein belongs to the carnitine/choline acetyltransferase family.

The protein resides in the cytoplasm. The catalysed reaction is (R)-carnitine + acetyl-CoA = O-acetyl-(R)-carnitine + CoA. Carnitine O-acetyltransferase involved in the shutteling of acetyl-CoA in the cell. This Saccharomyces cerevisiae (strain ATCC 204508 / S288c) (Baker's yeast) protein is Carnitine O-acetyltransferase YAT2.